Reading from the N-terminus, the 101-residue chain is Large ribosomal subunit protein eL30 (101 aa).

Belongs to the eukaryotic ribosomal protein eL30 family.

The protein is Large ribosomal subunit protein eL30 of Pyrobaculum calidifontis (strain DSM 21063 / JCM 11548 / VA1).